Consider the following 571-residue polypeptide: Proline--tRNA ligase (571 aa).

Belongs to the class-II aminoacyl-tRNA synthetase family. ProS type 1 subfamily. Homodimer.

Its subcellular location is the cytoplasm. The enzyme catalyses tRNA(Pro) + L-proline + ATP = L-prolyl-tRNA(Pro) + AMP + diphosphate. Catalyzes the attachment of proline to tRNA(Pro) in a two-step reaction: proline is first activated by ATP to form Pro-AMP and then transferred to the acceptor end of tRNA(Pro). As ProRS can inadvertently accommodate and process non-cognate amino acids such as alanine and cysteine, to avoid such errors it has two additional distinct editing activities against alanine. One activity is designated as 'pretransfer' editing and involves the tRNA(Pro)-independent hydrolysis of activated Ala-AMP. The other activity is designated 'posttransfer' editing and involves deacylation of mischarged Ala-tRNA(Pro). The misacylated Cys-tRNA(Pro) is not edited by ProRS. The chain is Proline--tRNA ligase from Actinobacillus pleuropneumoniae serotype 3 (strain JL03).